We begin with the raw amino-acid sequence, 105 residues long: ATPase inhibitor A, mitochondrial (105 aa).

The interval 17-52 (MSSDQLGELGTGAGKGGGGGGSVRAAGGSFGRREAA) is disordered. The segment at 22 to 51 (LGELGTGAGKGGGGGGSVRAAGGSFGRREA) is N-terminal inhibitory region. Positions 25–38 (LGTGAGKGGGGGGS) are enriched in gly residues. The stretch at 58 to 105 (FRQKEREQLAALKNHHEEEIDHHKKEIERLQREIDRHKGKIRKLKHDD) forms a coiled coil. The segment at 73–105 (HEEEIDHHKKEIERLQREIDRHKGKIRKLKHDD) is antiparallel alpha-helical coiled coil region.

It belongs to the ATPase inhibitor family. In terms of assembly, homodimer; represents the active form and is present at a pH value below 6.5. Homotetramer; represents the inactive form and is present at a pH value above 7.0.

The protein localises to the mitochondrion. Endogenous F(1)F(o)-ATPase inhibitor limiting ATP depletion when the mitochondrial membrane potential falls below a threshold and the F(1)F(o)-ATP synthase starts hydrolyzing ATP to pump protons out of the mitochondrial matrix. Required to avoid the consumption of cellular ATP when the F(1)F(o)-ATP synthase enzyme acts as an ATP hydrolase. Indirectly acts as a regulator of heme synthesis in erythroid tissues: regulates heme synthesis by modulating the mitochondrial pH and redox potential, allowing fech to efficiently catalyze the incorporation of iron into protoporphyrin IX to produce heme. The polypeptide is ATPase inhibitor A, mitochondrial (Danio rerio (Zebrafish)).